The chain runs to 494 residues: Flavin-containing monooxygenase ustF2 (494 aa).

Positions 1 to 21 are cleaved as a signal peptide; sequence MANPQTTRVAVVGAGISGVLA. 13-18 is an FAD binding site; that stretch reads GAGISG. The tract at residues 73–93 is disordered; that stretch reads EPSYPAMKPSKADPPATNEQE. Residue 250–255 participates in NADP(+) binding; that stretch reads GGGVSS. Asn459 carries N-linked (GlcNAc...) asparagine glycosylation.

Belongs to the FMO family.

It participates in mycotoxin biosynthesis. Flavin-containing monooxygenase; part of the gene cluster that mediates the biosynthesis of the secondary metabolite ustiloxin B, an antimitotic tetrapeptide. First, ustA is processed by the subtilisin-like endoprotease Kex2 that is outside the ustiloxin B gene cluster, at the C-terminal side of Arg-Lys, after transfer to Golgi apparatus through the endoplasmic reticulum (ER). Cleavage by KEX2 generates 16 peptides YAIG-I to YAIG-XVI. To process the precursor peptide further, at least two peptidases are necessary to cleave the N-terminal and C-terminal sides of the Tyr-Ala-Ile-Gly core peptide which serves as backbone for the synthesis of ustiloxin B, through cyclization and modification of the tyrosine with a non-protein coding amino acid, norvaline. One of the two peptidases must be the serine peptidase ustP; and the other pepdidase is probably ustH. Macrocyclization of the core peptide derived from ustA requires the tyrosinase ustQ, as well as the homologous oxidases ustYa and ustYb, and leads to the production of the first cyclization product N-desmethylustiloxin F. For the formation of N-desmethylustiloxin F, three oxidation steps are required, hydroxylation at the benzylic position, hydroxylation at either the aromatic ring of Tyr or beta-position of Ile, and oxidative cyclization. UstQ may catalyze the oxidation of a phenol moiety, whereas the ustYa and ustYb are most likely responsible for the remaining two-step oxidations. N-desmethylustiloxin F is then methylated by ustM to yield ustiloxin F which in turn substrate of the cytochrome P450 monooxygenase ustC which catalyzes the formation of S-deoxyustiloxin H. The flavoprotein monooxygenases ustF1 and ustF2 then participate in the modification of the side chain of S-deoxyustiloxin H, leading to the synthesis of an oxime intermediate, via ustiloxin H. Finally, carboxylative dehydration performed by the cysteine desulfurase-like protein ustD yields ustiloxin B. This is Flavin-containing monooxygenase ustF2 from Aspergillus flavus (strain ATCC 200026 / FGSC A1120 / IAM 13836 / NRRL 3357 / JCM 12722 / SRRC 167).